Consider the following 113-residue polypeptide: HIG1 domain-containing protein C25B8.07c, mitochondrial (113 aa).

The segment at 1 to 27 is disordered; the sequence is MSSKLPKKSEENLELPTFPASEESLSR. The 92-residue stretch at 12–103 folds into the HIG1 domain; the sequence is NLELPTFPAS…PPRREAPSNS (92 aa). Transmembrane regions (helical) follow at residues 39 to 59 and 75 to 95; these read PFIP…GYYI and VMSQ…IGPP.

It is found in the mitochondrion membrane. The chain is HIG1 domain-containing protein C25B8.07c, mitochondrial from Schizosaccharomyces pombe (strain 972 / ATCC 24843) (Fission yeast).